Consider the following 315-residue polypeptide: GTP cyclohydrolase MptA (315 aa).

The protein belongs to the GTP cyclohydrolase IV family. In terms of assembly, homodimer. Fe(2+) is required as a cofactor.

It carries out the reaction GTP + H2O = 7,8-dihydroneopterin 2',3'-cyclic phosphate + formate + diphosphate + H(+). Its pathway is cofactor biosynthesis; 5,6,7,8-tetrahydromethanopterin biosynthesis. Converts GTP to 7,8-dihydro-D-neopterin 2',3'-cyclic phosphate, the first intermediate in the biosynthesis of coenzyme methanopterin. This chain is GTP cyclohydrolase MptA, found in Methanococcus maripaludis (strain C6 / ATCC BAA-1332).